Here is a 216-residue protein sequence, read N- to C-terminus: Nucleoid occlusion factor SlmA (216 aa).

Residues 1 to 23 (MAEQLTLDSIEPEPEKQSAKIEK) are disordered. The span at 13-23 (EPEKQSAKIEK) shows a compositional bias: basic and acidic residues. The region spanning 28 to 88 (ERRQQVLTVL…ALIENIESSL (61 aa)) is the HTH tetR-type domain. The segment at residues 51–70 (TTARLAKEVGVSEAALYRYF) is a DNA-binding region (H-T-H motif).

This sequence belongs to the nucleoid occlusion factor SlmA family. In terms of assembly, homodimer. Interacts with FtsZ.

It is found in the cytoplasm. It localises to the nucleoid. Its function is as follows. Required for nucleoid occlusion (NO) phenomenon, which prevents Z-ring formation and cell division over the nucleoid. Acts as a DNA-associated cell division inhibitor that binds simultaneously chromosomal DNA and FtsZ, and disrupts the assembly of FtsZ polymers. SlmA-DNA-binding sequences (SBS) are dispersed on non-Ter regions of the chromosome, preventing FtsZ polymerization at these regions. The sequence is that of Nucleoid occlusion factor SlmA from Mannheimia succiniciproducens (strain KCTC 0769BP / MBEL55E).